The primary structure comprises 529 residues: BTB/POZ domain-containing protein 6 (529 aa).

Residues 127-197 form the BTB domain; the sequence is ADVHFIVGPA…LYSDEIDLEA (71 aa).

In terms of assembly, homodimer and heterodimer. Interacts with cul3 via the BTB domain.

The protein localises to the cytoplasm. Adapter protein for the cul3 E3 ubiquitin-protein ligase complex. Involved in late neuronal development and muscle formation. The polypeptide is BTB/POZ domain-containing protein 6 (btbd6) (Xenopus tropicalis (Western clawed frog)).